The chain runs to 350 residues: Methylthioribose-1-phosphate isomerase (350 aa).

Residues 48-50 (RGA), arginine 93, and glutamine 198 each bind substrate. Aspartate 239 functions as the Proton donor in the catalytic mechanism. 249–250 (NK) contributes to the substrate binding site.

Belongs to the eIF-2B alpha/beta/delta subunits family. MtnA subfamily.

It catalyses the reaction 5-(methylsulfanyl)-alpha-D-ribose 1-phosphate = 5-(methylsulfanyl)-D-ribulose 1-phosphate. Its pathway is amino-acid biosynthesis; L-methionine biosynthesis via salvage pathway; L-methionine from S-methyl-5-thio-alpha-D-ribose 1-phosphate: step 1/6. Functionally, catalyzes the interconversion of methylthioribose-1-phosphate (MTR-1-P) into methylthioribulose-1-phosphate (MTRu-1-P). The polypeptide is Methylthioribose-1-phosphate isomerase (Fervidobacterium nodosum (strain ATCC 35602 / DSM 5306 / Rt17-B1)).